The following is a 378-amino-acid chain: Ecotin-like protein 3 (378 aa).

Disordered regions lie at residues 191 to 216 (HRLS…HAAP) and 238 to 378 (PQNN…KADP). Positions 274 to 287 (NEPSPSRPRLSSTE) are enriched in polar residues. The segment covering 337 to 348 (RKAEDNVYEKTM) has biased composition (basic and acidic residues). Residues 362–378 (KASASSKKSGNGSKADP) show a composition bias toward low complexity.

It belongs to the protease inhibitor I11 (ecotin) family.

The sequence is that of Ecotin-like protein 3 from Leishmania infantum.